A 159-amino-acid polypeptide reads, in one-letter code: 2-C-methyl-D-erythritol 2,4-cyclodiphosphate synthase (159 aa).

A divalent metal cation is bound by residues Asp10 and His12. Residues 10–12 (DVH) and 36–37 (HS) contribute to the 4-CDP-2-C-methyl-D-erythritol 2-phosphate site. An a divalent metal cation-binding site is contributed by His44. 4-CDP-2-C-methyl-D-erythritol 2-phosphate contacts are provided by residues 58–60 (DIG), 63–67 (FPDTD), 102–108 (AQAPKMA), 134–137 (TTTE), Phe141, and Arg144.

The protein belongs to the IspF family. In terms of assembly, homotrimer. A divalent metal cation is required as a cofactor.

The enzyme catalyses 4-CDP-2-C-methyl-D-erythritol 2-phosphate = 2-C-methyl-D-erythritol 2,4-cyclic diphosphate + CMP. The protein operates within isoprenoid biosynthesis; isopentenyl diphosphate biosynthesis via DXP pathway; isopentenyl diphosphate from 1-deoxy-D-xylulose 5-phosphate: step 4/6. In terms of biological role, involved in the biosynthesis of isopentenyl diphosphate (IPP) and dimethylallyl diphosphate (DMAPP), two major building blocks of isoprenoid compounds. Catalyzes the conversion of 4-diphosphocytidyl-2-C-methyl-D-erythritol 2-phosphate (CDP-ME2P) to 2-C-methyl-D-erythritol 2,4-cyclodiphosphate (ME-CPP) with a corresponding release of cytidine 5-monophosphate (CMP). The polypeptide is 2-C-methyl-D-erythritol 2,4-cyclodiphosphate synthase (Shewanella sp. (strain ANA-3)).